The primary structure comprises 302 residues: tRNA pseudouridine synthase B (302 aa).

Catalysis depends on aspartate 38, which acts as the Nucleophile.

Belongs to the pseudouridine synthase TruB family. Type 1 subfamily.

The enzyme catalyses uridine(55) in tRNA = pseudouridine(55) in tRNA. In terms of biological role, responsible for synthesis of pseudouridine from uracil-55 in the psi GC loop of transfer RNAs. This chain is tRNA pseudouridine synthase B, found in Geobacillus thermodenitrificans (strain NG80-2).